A 339-amino-acid polypeptide reads, in one-letter code: Zinc metalloprotease MJ0392 (339 aa).

The next 2 membrane-spanning stretches (helical) occupy residues 10–30 (IMGIPIELHITFILFLVVIIG) and 33–53 (IMNNSIFWAVLFILLFVSVVL). His54 serves as a coordination point for Zn(2+). Residue Glu55 is part of the active site. His58 is a binding site for Zn(2+). 2 helical membrane-spanning segments follow: residues 96–116 (IAGPLVSFIIGIVLLIVSQFF) and 125–145 (LLYTLSLLNLMLGGFNLIPAF). Asp148 contributes to the Zn(2+) binding site. 2 helical membrane passes run 180–200 (IMLLFGLLSMNIILILVSLFV) and 251–271 (YFGYPVVENGKLVGCIGIGNI). CBS domains are found at residues 226 to 281 (MTPN…VRDY) and 281 to 335 (YMEK…ELKE).

Belongs to the peptidase M50B family. As to quaternary structure, monomer. Zn(2+) is required as a cofactor.

The protein localises to the cell membrane. Its activity is regulated as follows. Inhibited by 1,10-phenanthroline. In terms of biological role, a site-2 regulated intramembrane protease (S2P) that cleaves type-2 transmembrane proteins within their membrane-spanning domains; its endogenous substrate is unknown. Regulated intramembrane proteolysis (RIP) occurs when an extracytoplasmic signal triggers a concerted proteolytic cascade to transmit information and elicit cellular responses. A membrane-spanning regulatory substrate protein is first cut extracytoplasmically (site-1 protease, S1P), then within the membrane itself (site-2 protease, S2P, this enzyme), while cytoplasmic proteases finish degrading the regulatory protein, liberating the effector protein. Possible signals, S1P and substrates are unknown in this organism. In Methanocaldococcus jannaschii (strain ATCC 43067 / DSM 2661 / JAL-1 / JCM 10045 / NBRC 100440) (Methanococcus jannaschii), this protein is Zinc metalloprotease MJ0392.